Reading from the N-terminus, the 333-residue chain is Tetraacyldisaccharide 4'-kinase (333 aa).

60-67 (TVGGTGKT) provides a ligand contact to ATP.

It belongs to the LpxK family.

The enzyme catalyses a lipid A disaccharide + ATP = a lipid IVA + ADP + H(+). It functions in the pathway glycolipid biosynthesis; lipid IV(A) biosynthesis; lipid IV(A) from (3R)-3-hydroxytetradecanoyl-[acyl-carrier-protein] and UDP-N-acetyl-alpha-D-glucosamine: step 6/6. Functionally, transfers the gamma-phosphate of ATP to the 4'-position of a tetraacyldisaccharide 1-phosphate intermediate (termed DS-1-P) to form tetraacyldisaccharide 1,4'-bis-phosphate (lipid IVA). The chain is Tetraacyldisaccharide 4'-kinase from Pseudomonas putida (strain GB-1).